The chain runs to 125 residues: Large ribosomal subunit protein eL32 (125 aa).

It belongs to the eukaryotic ribosomal protein eL32 family.

This chain is Large ribosomal subunit protein eL32 (rpl32e), found in Sulfolobus acidocaldarius (strain ATCC 33909 / DSM 639 / JCM 8929 / NBRC 15157 / NCIMB 11770).